The sequence spans 294 residues: Glyceraldehyde-3-phosphate dehydrogenase (294 aa).

Asp19, Lys63, and Thr105 together coordinate NAD(+). D-glyceraldehyde 3-phosphate is bound by residues 134 to 136 (SCT) and Thr165. Cys135 serves as the catalytic Nucleophile. The tract at residues 169 to 188 (KTVDGPSHKDWRGGRGASQN) is disordered. D-glyceraldehyde 3-phosphate-binding positions include 194-195 (TG) and Arg217.

The protein belongs to the glyceraldehyde-3-phosphate dehydrogenase family. Homotetramer.

It localises to the cytoplasm. It carries out the reaction D-glyceraldehyde 3-phosphate + phosphate + NAD(+) = (2R)-3-phospho-glyceroyl phosphate + NADH + H(+). It functions in the pathway carbohydrate degradation; glycolysis; pyruvate from D-glyceraldehyde 3-phosphate: step 1/5. In terms of biological role, catalyzes the oxidative phosphorylation of glyceraldehyde 3-phosphate (G3P) to 1,3-bisphosphoglycerate (BPG) using the cofactor NAD. The first reaction step involves the formation of a hemiacetal intermediate between G3P and a cysteine residue, and this hemiacetal intermediate is then oxidized to a thioester, with concomitant reduction of NAD to NADH. The reduced NADH is then exchanged with the second NAD, and the thioester is attacked by a nucleophilic inorganic phosphate to produce BPG. The sequence is that of Glyceraldehyde-3-phosphate dehydrogenase (gap) from Serratia marcescens.